The following is a 338-amino-acid chain: Ketol-acid reductoisomerase (NADP(+)) (338 aa).

The region spanning 1–181 (MKVYYDKDCN…GGGRSGIIET (181 aa)) is the KARI N-terminal Rossmann domain. NADP(+)-binding positions include 24-27 (YGSQ), arginine 47, serine 50, serine 52, and 82-85 (DETQ). Histidine 107 is an active-site residue. Glycine 133 provides a ligand contact to NADP(+). One can recognise a KARI C-terminal knotted domain in the interval 182–327 (NFREETETDL…ARLRAMMPWI (146 aa)). Mg(2+) is bound by residues aspartate 190, glutamate 194, glutamate 226, and glutamate 230. Serine 251 contacts substrate.

It belongs to the ketol-acid reductoisomerase family. The cofactor is Mg(2+).

It catalyses the reaction (2R)-2,3-dihydroxy-3-methylbutanoate + NADP(+) = (2S)-2-acetolactate + NADPH + H(+). The enzyme catalyses (2R,3R)-2,3-dihydroxy-3-methylpentanoate + NADP(+) = (S)-2-ethyl-2-hydroxy-3-oxobutanoate + NADPH + H(+). Its pathway is amino-acid biosynthesis; L-isoleucine biosynthesis; L-isoleucine from 2-oxobutanoate: step 2/4. It functions in the pathway amino-acid biosynthesis; L-valine biosynthesis; L-valine from pyruvate: step 2/4. In terms of biological role, involved in the biosynthesis of branched-chain amino acids (BCAA). Catalyzes an alkyl-migration followed by a ketol-acid reduction of (S)-2-acetolactate (S2AL) to yield (R)-2,3-dihydroxy-isovalerate. In the isomerase reaction, S2AL is rearranged via a Mg-dependent methyl migration to produce 3-hydroxy-3-methyl-2-ketobutyrate (HMKB). In the reductase reaction, this 2-ketoacid undergoes a metal-dependent reduction by NADPH to yield (R)-2,3-dihydroxy-isovalerate. The polypeptide is Ketol-acid reductoisomerase (NADP(+)) (Pelobacter propionicus (strain DSM 2379 / NBRC 103807 / OttBd1)).